Reading from the N-terminus, the 2274-residue chain is Adenomatous polyposis coli protein 2 (2274 aa).

Residues 5 to 59 (MASYEQLVRQVEALKAENTHLRQELRDNSSHLSKLETETSGMKEVLKHLQGKLEQ) adopt a coiled-coil conformation. Disordered regions lie at residues 97 to 120 (GPEP…KDSF) and 248 to 269 (VEEE…QPGN). ARM repeat units follow at residues 301–341 (PESC…GAKD), 472–511 (ANKA…NLSW), 515–555 (INSK…NLSA), 557–602 (STEN…NVSS), 608–647 (EDYR…NLSA), and 650–689 (PRDQ…NLLA). The stretch at 832-856 (AAKAKAKLALAVARIDRLVEDISAL) forms a coiled coil. Disordered stretches follow at residues 859 to 901 (SSDD…GSRA), 1061 to 1143 (CSSL…NCVQ), and 1165 to 1216 (SIAS…TSQF). The span at 861–870 (DDSFSLSSGD) shows a compositional bias: low complexity. Copy 1 of the repeat occupies 1049-1068 (LVAQDGPMSLSRCSSLSSLS). Residues 1049-1565 (LVAQDGPMSL…SLTSSASSLS (517 aa)) are 5 X 20 AA approximate repeat of F-X-V-E-X-T-P-X-C-F-S-R-X-S-S-L-S-S-L-S. Residues 1049-1565 (LVAQDGPMSL…SLTSSASSLS (517 aa)) are interaction with CTNNB1. Over residues 1077–1086 (QAENLDSDSS) the composition is skewed to polar residues. The segment covering 1092-1103 (EAGPGEAELGRA) has biased composition (low complexity). Positions 1133-1143 (TPSSSSENCVQ) are enriched in polar residues. Repeat 2 spans residues 1140–1159 (NCVQETPLVLSRCSSVSSLG). The stretch at 1250 to 1269 (FTVEKPDENFSCASSLSALA) is repeat 3. Disordered stretches follow at residues 1290–1323 (ERAV…SATD), 1368–1480 (RGDD…LQSL), 1493–1631 (FYDS…DIRP), 1699–2003 (STLQ…RGRP), 2022–2122 (PRQP…IKDE), and 2135–2274 (TALP…SLLE). Residues 1374–1397 (TDSAEGTPVNFSSAASLSDETLQG) are compositionally biased toward polar residues. The stretch at 1375 to 1394 (DSAEGTPVNFSSAASLSDET) is repeat 4. A compositionally biased stretch (basic and acidic residues) spans 1399–1411 (SRDKPAGPGDRQK). The span at 1455-1470 (RPQSARSNRDSSCQTR) shows a compositional bias: polar residues. The segment covering 1517–1529 (LKREKPAGRKETP) has biased composition (basic and acidic residues). The stretch at 1546–1565 (LIVDETPPCYSLTSSASSLS) is repeat 5. The span at 1556–1574 (SLTSSASSLSEPEAPEQPA) shows a compositional bias: low complexity. 2 positions are modified to phosphoserine: S1563 and S1565. The span at 1608–1624 (PRRRTQVPGSRRRKPRA) shows a compositional bias: basic residues. Composition is skewed to low complexity over residues 1780–1795 (SGPC…SGTT) and 1839–1868 (LAKT…TPTG). A required for localization to microtubules and function in microtubule stabilization region spans residues 1792–1871 (SGTTQPETVT…PLATPTGGPL (80 aa)). S1861 is modified (phosphoserine). A compositionally biased stretch (pro residues) spans 1910–1921 (RVPPPLARPSPE). 2 stretches are compositionally biased toward low complexity: residues 1945 to 1955 (RMASARSSGSE) and 1983 to 1997 (LSSA…QAAS). Positions 2037–2114 (GLAPLAPRRT…PLPRVAPPGT (78 aa)) are interaction with MAPRE1 and MAPRE3. Polar residues predominate over residues 2165 to 2179 (DVATSKTNSSTSPSL).

The protein belongs to the adenomatous polyposis coli (APC) family. In terms of assembly, interacts with PSRC1. Interacts with MAPRE3. Interacts with APC, CTNNB1, TP53BP2, MAPRE1 and possibly with AXIN2. In terms of tissue distribution, expressed in brain and other neural tissues.

It localises to the cytoplasm. Its subcellular location is the cytoskeleton. The protein resides in the golgi apparatus. It is found in the perinuclear region. In terms of biological role, stabilizes microtubules and may regulate actin fiber dynamics through the activation of Rho family GTPases. May also function in Wnt signaling by promoting the rapid degradation of CTNNB1. In Mus musculus (Mouse), this protein is Adenomatous polyposis coli protein 2 (Apc2).